Here is a 343-residue protein sequence, read N- to C-terminus: Adenosine kinase (343 aa).

Aspartate 296 is an active-site residue.

Belongs to the carbohydrate kinase PfkB family. Requires Mg(2+) as cofactor.

The catalysed reaction is adenosine + ATP = AMP + ADP + H(+). It participates in purine metabolism; AMP biosynthesis via salvage pathway; AMP from adenosine: step 1/1. In terms of biological role, ATP dependent phosphorylation of adenosine and other related nucleoside analogs to monophosphate derivatives. Can also act on the cytokinin isopentenyladenosine to produce isopentenyladenosine monophosphate. The polypeptide is Adenosine kinase (ADK) (Physcomitrium patens (Spreading-leaved earth moss)).